Here is a 591-residue protein sequence, read N- to C-terminus: Calnexin (591 aa).

Positions 1-20 are cleaved as a signal peptide; sequence MEGKWLLCLLLVLGTAAVEA. The Lumenal portion of the chain corresponds to 21–482; that stretch reads HDGHDDDAID…QMLEAAEERP (462 aa). Residues Ser-75 and Asp-118 each coordinate Ca(2+). Lys-138 carries the post-translational modification N6-acetyllysine. Cys-161 and Cys-195 are joined by a disulfide. An alpha-D-glucoside is bound by residues Tyr-165, Lys-167, Tyr-186, and Asp-193. The interval 261-347 is disordered; that stretch reads GNLLNDMTPP…EKPEDWDEDM (87 aa). Basic and acidic residues predominate over residues 275–320; it reads REIEDPEDRKPEDWDERPKIADPDAVKPDDWDEDAPSKIPDEEATK. The segment at 277 to 410 is p domain (Extended arm); that stretch reads IEDPEDRKPE…RKIPNPDFFE (134 aa). 5 repeat units span residues 279–291, 296–308, 315–327, 334–346, and 349–359. 2 4 X approximate repeats regions span residues 279-346 and 349-406; these read DPED…WDED and GEWE…IPNP. Residues 324 to 347 are compositionally biased toward acidic residues; sequence WLDDEPEYIPDPDAEKPEDWDEDM. The tract at residues 327–360 is interaction with PPIB; sequence DEPEYIPDPDAEKPEDWDEDMDGEWEAPQIANPK. Cysteines 361 and 367 form a disulfide. 3 repeat units span residues 368-378, 382-392, and 396-406. Residue Glu-426 coordinates an alpha-D-glucoside. Residue Asp-437 coordinates Ca(2+). The chain crosses the membrane as a helical span at residues 483–503; sequence WLWVVYILTVALPVFLVILFC. S-palmitoyl cysteine attachment occurs at residues Cys-503 and Cys-504. Residues 504–591 are Cytoplasmic-facing; the sequence is CSGKKQSNAM…SPRNRKPRRE (88 aa). Residues 504-591 form a sufficient to mediate interaction with SGIP1 region; it reads CSGKKQSNAM…SPRNRKPRRE (88 aa). Basic and acidic residues predominate over residues 514-539; sequence EYKKTDAPQPDVKDEEGKEEEKNKRD. The disordered stretch occupies residues 514 to 591; it reads EYKKTDAPQP…SPRNRKPRRE (78 aa). Phosphoserine is present on Ser-553. Acidic residues predominate over residues 555-568; the sequence is AEEDGVTGSQDEED. Thr-561 carries the post-translational modification Phosphothreonine. Ser-563 carries the phosphoserine; by MAPK3 modification. Ser-582 carries the post-translational modification Phosphoserine.

This sequence belongs to the calreticulin family. In terms of assembly, interacts with MAPK3/ERK1. Interacts with KCNH2. Associates with ribosomes. The palmitoylated form interacts with the ribosome-translocon complex component SSR1, promoting efficient folding of glycoproteins. Interacts with SERPINA2P/SERPINA2 and with the S and Z variants of SERPINA1. Interacts with SGIP1; involved in negative regulation of endocytosis. Interacts with PPIB. Interacts with SMIM22. Interacts with TMX2. Interacts with TMEM35A/NACHO. Interacts with CHRNA7. Interacts with reticulophagy regulators RETREG2 and RETREG3. Interacts with DNM1L; may form part of a larger protein complex at the ER-mitochondrial interface during mitochondrial fission. Interacts with ADAM7. Post-translationally, phosphorylated at Ser-563 by MAPK3/ERK1. Phosphorylation by MAPK3/ERK1 increases its association with ribosomes. In terms of processing, palmitoylation by DHHC6 leads to the preferential localization to the perinuclear rough ER. It mediates the association of calnexin with the ribosome-translocon complex (RTC) which is required for efficient folding of glycosylated proteins. Ubiquitinated, leading to proteasomal degradation. Probably ubiquitinated by ZNRF4. As to expression, expressed in sperm (at protein level).

The protein localises to the endoplasmic reticulum membrane. Its subcellular location is the mitochondrion membrane. It is found in the melanosome membrane. Functionally, calcium-binding protein that interacts with newly synthesized monoglucosylated glycoproteins in the endoplasmic reticulum. It may act in assisting protein assembly and/or in the retention within the ER of unassembled protein subunits. It seems to play a major role in the quality control apparatus of the ER by the retention of incorrectly folded proteins. Associated with partial T-cell antigen receptor complexes that escape the ER of immature thymocytes, it may function as a signaling complex regulating thymocyte maturation. Additionally it may play a role in receptor-mediated endocytosis at the synapse. The protein is Calnexin (Canx) of Mus musculus (Mouse).